A 644-amino-acid polypeptide reads, in one-letter code: Exoribonuclease 2 (644 aa).

The RNB domain maps to 189-516; sequence RQDLTALNFV…NHRLLKAVIK (328 aa). The region spanning 561–643 is the S1 motif domain; it reads DTRFAAEIID…DTRSIIARPA (83 aa).

Belongs to the RNR ribonuclease family. RNase II subfamily.

It localises to the cytoplasm. The catalysed reaction is Exonucleolytic cleavage in the 3'- to 5'-direction to yield nucleoside 5'-phosphates.. Involved in mRNA degradation. Hydrolyzes single-stranded polyribonucleotides processively in the 3' to 5' direction. This is Exoribonuclease 2 from Salmonella arizonae (strain ATCC BAA-731 / CDC346-86 / RSK2980).